The following is a 352-amino-acid chain: Ion-translocating oxidoreductase complex subunit D (352 aa).

4 helical membrane-spanning segments follow: residues isoleucine 20–glycine 40, glycine 42–leucine 62, valine 69–proline 91, and proline 123–leucine 143. The residue at position 187 (threonine 187) is an FMN phosphoryl threonine. 5 helical membrane-spanning segments follow: residues leucine 215–leucine 235, tryptophan 242–phenylalanine 262, leucine 267–leucine 287, leucine 301–proline 321, and aspartate 322–threonine 342.

Belongs to the NqrB/RnfD family. As to quaternary structure, the complex is composed of six subunits: RsxA, RsxB, RsxC, RsxD, RsxE and RsxG. The cofactor is FMN.

It localises to the cell inner membrane. Its function is as follows. Part of a membrane-bound complex that couples electron transfer with translocation of ions across the membrane. Required to maintain the reduced state of SoxR. This chain is Ion-translocating oxidoreductase complex subunit D, found in Salmonella paratyphi A (strain ATCC 9150 / SARB42).